A 618-amino-acid chain; its full sequence is Dihydroxy-acid dehydratase (618 aa).

D81 is a Mg(2+) binding site. Residue C122 participates in [2Fe-2S] cluster binding. Residues D123 and K124 each contribute to the Mg(2+) site. An N6-carboxylysine modification is found at K124. Residue C195 coordinates [2Fe-2S] cluster. E490 contributes to the Mg(2+) binding site. S516 serves as the catalytic Proton acceptor.

It belongs to the IlvD/Edd family. In terms of assembly, homodimer. It depends on [2Fe-2S] cluster as a cofactor. Mg(2+) is required as a cofactor.

It catalyses the reaction (2R)-2,3-dihydroxy-3-methylbutanoate = 3-methyl-2-oxobutanoate + H2O. The catalysed reaction is (2R,3R)-2,3-dihydroxy-3-methylpentanoate = (S)-3-methyl-2-oxopentanoate + H2O. It functions in the pathway amino-acid biosynthesis; L-isoleucine biosynthesis; L-isoleucine from 2-oxobutanoate: step 3/4. It participates in amino-acid biosynthesis; L-valine biosynthesis; L-valine from pyruvate: step 3/4. Functionally, functions in the biosynthesis of branched-chain amino acids. Catalyzes the dehydration of (2R,3R)-2,3-dihydroxy-3-methylpentanoate (2,3-dihydroxy-3-methylvalerate) into 2-oxo-3-methylpentanoate (2-oxo-3-methylvalerate) and of (2R)-2,3-dihydroxy-3-methylbutanoate (2,3-dihydroxyisovalerate) into 2-oxo-3-methylbutanoate (2-oxoisovalerate), the penultimate precursor to L-isoleucine and L-valine, respectively. The protein is Dihydroxy-acid dehydratase of Gluconobacter oxydans (strain 621H) (Gluconobacter suboxydans).